The chain runs to 577 residues: Aspartate--tRNA(Asp/Asn) ligase (577 aa).

Position 171 (E171) interacts with L-aspartate. The tract at residues 195–198 is aspartate; the sequence is QLFK. R217 serves as a coordination point for L-aspartate. Residues 217–219 and Q226 each bind ATP; that span reads RDE. H444 contacts L-aspartate. E474 is an ATP binding site. R481 provides a ligand contact to L-aspartate. ATP is bound at residue 526-529; sequence GFDR.

This sequence belongs to the class-II aminoacyl-tRNA synthetase family. Type 1 subfamily. As to quaternary structure, homodimer.

It localises to the cytoplasm. It carries out the reaction tRNA(Asx) + L-aspartate + ATP = L-aspartyl-tRNA(Asx) + AMP + diphosphate. In terms of biological role, aspartyl-tRNA synthetase with relaxed tRNA specificity since it is able to aspartylate not only its cognate tRNA(Asp) but also tRNA(Asn). Reaction proceeds in two steps: L-aspartate is first activated by ATP to form Asp-AMP and then transferred to the acceptor end of tRNA(Asp/Asn). The protein is Aspartate--tRNA(Asp/Asn) ligase of Helicobacter pylori (strain P12).